The sequence spans 158 residues: L-alanine exporter AlaE (158 aa).

4 helical membrane-spanning segments follow: residues 23–43, 53–73, 92–112, and 117–137; these read FAMV…VSGM, LVAI…RDAV, VIAY…FVGA, and IITA…AYGY.

It belongs to the AlaE exporter family.

It localises to the cell inner membrane. Functionally, exports L-alanine. The protein is L-alanine exporter AlaE of Cronobacter sakazakii (strain ATCC BAA-894) (Enterobacter sakazakii).